The following is an 831-amino-acid chain: Valine--tRNA ligase (831 aa).

The 'HIGH' region signature appears at 77–87; sequence PFTSGELHMGH. The short motif at 564–568 is the 'KMSKS' region element; the sequence is RMSKS. Lys567 is an ATP binding site.

It belongs to the class-I aminoacyl-tRNA synthetase family. ValS type 2 subfamily.

It localises to the cytoplasm. The enzyme catalyses tRNA(Val) + L-valine + ATP = L-valyl-tRNA(Val) + AMP + diphosphate. In terms of biological role, catalyzes the attachment of valine to tRNA(Val). As ValRS can inadvertently accommodate and process structurally similar amino acids such as threonine, to avoid such errors, it has a 'posttransfer' editing activity that hydrolyzes mischarged Thr-tRNA(Val) in a tRNA-dependent manner. The polypeptide is Valine--tRNA ligase (Sulfolobus acidocaldarius (strain ATCC 33909 / DSM 639 / JCM 8929 / NBRC 15157 / NCIMB 11770)).